We begin with the raw amino-acid sequence, 1386 residues long: X-linked retinitis pigmentosa GTPase regulator homolog (1386 aa).

Disordered stretches follow at residues 1 to 25 (MFFKRSTNSRKTSANSSSDTSTSSE), 37 to 56 (AGARSQKGSVHRQSGKKARR), and 730 to 760 (MPQMNAKSKRSDSVTNGAPTLPPPAPKPEQH). Positions 9–25 (SRKTSANSSSDTSTSSE) are enriched in low complexity. The segment covering 45 to 56 (SVHRQSGKKARR) has biased composition (basic residues). RCC1 repeat units lie at residues 737-787 (SKRS…VLSS), 788-838 (SGQL…FICS), 839-891 (DGSL…VLTD), and 893-943 (GRVL…CITE). The segment at 972–994 (LKNTEDPSSPSPSTNGSTPRVNL) is disordered. 2 RCC1 repeats span residues 1034-1085 (EGTL…ASTD) and 1087-1139 (GSVF…FVQK).

Functionally, could be a guanine-nucleotide releasing factor for glo-1. May play a role in gut granule biogenesis. Regulates axon termination in PLM and ALM neurons. The polypeptide is X-linked retinitis pigmentosa GTPase regulator homolog (glo-4) (Caenorhabditis elegans).